The chain runs to 599 residues: Adenine deaminase (599 aa).

This sequence belongs to the metallo-dependent hydrolases superfamily. Adenine deaminase family. It depends on Mn(2+) as a cofactor.

The catalysed reaction is adenine + H2O + H(+) = hypoxanthine + NH4(+). This Clostridium botulinum (strain ATCC 19397 / Type A) protein is Adenine deaminase.